The sequence spans 609 residues: Mitochondrial nucleoid-associated protein 1 (609 aa).

Topologically, residues 1 to 552 are mitochondrial matrix; it reads MSDNPPRMEV…IRCNTTIRKS (552 aa). Disordered regions lie at residues 142–168, 183–202, and 410–441; these read ASEK…NPSE, SNQD…TTSG, and QLSL…HTPQ. The span at 146–161 shows a compositional bias: basic and acidic residues; sequence TSPKRELAKDLPKSGE. The span at 418–441 shows a compositional bias: polar residues; sequence DSQFQASHTGCQSPLCSAQRHTPQ. The chain crosses the membrane as a helical span at residues 553-573; it reads GFGGITMLFTGYFVLCCSWSF. Topologically, residues 574 to 609 are mitochondrial intermembrane; that stretch reads RRLKKLCRPLPWKSTVPPCIGVAKTTGDCRSKTCLD.

The protein resides in the mitochondrion inner membrane. It localises to the mitochondrion matrix. Its subcellular location is the mitochondrion nucleoid. Functionally, critical regulator of mitochondrial DNA (mtDNA) abundance. Binds dsDNA throughout the mitochondrial genome without sequence specificity and controls mtDNA copy number by promoting its replication. Also plays important roles in mitochondrial metabolism and cell proliferation. The chain is Mitochondrial nucleoid-associated protein 1 from Homo sapiens (Human).